A 381-amino-acid polypeptide reads, in one-letter code: MNLNFMPLLHAYNHASIDFHFNSSARDFCVHEVPLYEFSNTGEHAVIQVRKSGLSTLEMLQIFSQILGVKIAELGYAGLKDKNALTTQFISLPKKYAPLLEKNTHNLQERNLKILSLNYHHNKIKLGHLKGNRFFMRFKKMTPLNAQKTKQVLEQIARFGMPNYFGSQRFGKFNDNHKEGLKILQNQTKFAHQKLNAFLISSYQSYLFNALLSKRLEISKIISAFSLKENLEFFKQNNLSVNSNALKALKNQAHPFKILEGDVMCHYPYGKFFDALELGKEGERFLNKEAAPTGLLDGKKALYAKNLSFEIEKEFQHNLLSSHAKTLGSRRFFWVFAENVTSQYMKEKAQFELGFYLPKGSYASALLKKIKHEKGEKYDKF.

The Nucleophile role is filled by aspartate 81. Residues 160 to 335 (GMPNYFGSQR…TLGSRRFFWV (176 aa)) form the TRUD domain.

This sequence belongs to the pseudouridine synthase TruD family.

It carries out the reaction uridine(13) in tRNA = pseudouridine(13) in tRNA. Functionally, responsible for synthesis of pseudouridine from uracil-13 in transfer RNAs. In Helicobacter pylori (strain P12), this protein is tRNA pseudouridine synthase D.